The primary structure comprises 312 residues: Protein ABIL2 (312 aa).

A disordered region spans residues 173 to 287; it reads TIRETPPPPV…TEQQQPSKSK (115 aa). A compositionally biased stretch (low complexity) spans 183 to 199; sequence RKSTSQSSSPRQPPQRS. Residues 230-251 show a composition bias toward polar residues; it reads SVATRKSASISRPTTPSKSRSI. The segment covering 269 to 279 has biased composition (basic and acidic residues); the sequence is AFEKDNQKETE.

Belongs to the ABI family. Binds SCAR.

The protein resides in the cytoplasm. It localises to the cytoskeleton. Involved in regulation of actin and microtubule organization. Part of a WAVE complex that activates the Arp2/3 complex. This chain is Protein ABIL2 (ABIL2), found in Arabidopsis thaliana (Mouse-ear cress).